Here is a 570-residue protein sequence, read N- to C-terminus: Polypeptide N-acetylgalactosaminyltransferase 2 (570 aa).

The Cytoplasmic segment spans residues 1–6; sequence MRRRSR. Residues 7–24 form a helical; Signal-anchor for type II membrane protein membrane-spanning segment; it reads MLLCFALLWVLGIAYYMY. The Lumenal portion of the chain corresponds to 25–570; that stretch reads SGGGSALAAG…QWKFSLNLQQ (546 aa). Ser-29 carries O-linked (Xyl...) (chondroitin sulfate) serine glycosylation. 4 cysteine pairs are disulfide-bonded: Cys-125/Cys-353, Cys-344/Cys-422, Cys-455/Cys-472, and Cys-495/Cys-512. Residues 134-239 are catalytic subdomain A; that stretch reads LPATSVVITF…ERWLEPLLER (106 aa). Residues Thr-142, Asp-175, and Arg-200 each coordinate substrate. Asp-223 serves as a coordination point for Mn(2+). Ser-224 lines the substrate pocket. His-225 contacts Mn(2+). Positions 299–361 are catalytic subdomain B; it reads PIKTPMIAGG…PCSRVGHVFR (63 aa). Substrate is bound at residue Trp-330. Mn(2+) is bound at residue His-358. Substrate contacts are provided by Arg-361, His-364, and Tyr-366. Residues 442–565 enclose the Ricin B-type lectin domain; the sequence is QDIAFGALQQ…PALSQQWKFS (124 aa). A glycan (N-linked (GlcNAc...) asparagine) is linked at Asn-515. A Phosphoserine modification is found at Ser-535. Cys-538 and Cys-554 are disulfide-bonded.

This sequence belongs to the glycosyltransferase 2 family. GalNAc-T subfamily. The cofactor is Mn(2+). Widely expressed at high level.

It localises to the golgi apparatus. Its subcellular location is the golgi stack membrane. The protein localises to the secreted. It catalyses the reaction L-seryl-[protein] + UDP-N-acetyl-alpha-D-galactosamine = a 3-O-[N-acetyl-alpha-D-galactosaminyl]-L-seryl-[protein] + UDP + H(+). The enzyme catalyses L-threonyl-[protein] + UDP-N-acetyl-alpha-D-galactosamine = a 3-O-[N-acetyl-alpha-D-galactosaminyl]-L-threonyl-[protein] + UDP + H(+). It functions in the pathway protein modification; protein glycosylation. Catalyzes the initial reaction in O-linked oligosaccharide biosynthesis, the transfer of an N-acetyl-D-galactosamine residue to a serine or threonine residue on the protein receptor. Has a broad spectrum of substrates for peptides such as EA2, Muc5AC, Muc1a, Muc1b. Probably involved in O-linked glycosylation of the immunoglobulin A1 (IgA1) hinge region. Involved in O-linked glycosylation of APOC-III, ANGPTL3 and PLTP. It participates in the regulation of HDL-C metabolism. The polypeptide is Polypeptide N-acetylgalactosaminyltransferase 2 (Galnt2) (Mus musculus (Mouse)).